The sequence spans 340 residues: Phenylalanine--tRNA ligase alpha subunit (340 aa).

Glu-254 contributes to the Mg(2+) binding site.

It belongs to the class-II aminoacyl-tRNA synthetase family. Phe-tRNA synthetase alpha subunit type 1 subfamily. In terms of assembly, tetramer of two alpha and two beta subunits. Mg(2+) serves as cofactor.

The protein localises to the cytoplasm. It carries out the reaction tRNA(Phe) + L-phenylalanine + ATP = L-phenylalanyl-tRNA(Phe) + AMP + diphosphate + H(+). The chain is Phenylalanine--tRNA ligase alpha subunit from Caldicellulosiruptor bescii (strain ATCC BAA-1888 / DSM 6725 / KCTC 15123 / Z-1320) (Anaerocellum thermophilum).